The following is a 280-amino-acid chain: Tumor necrosis factor ligand superfamily member 6 (280 aa).

Over 1-80 (MQQPLNYPYP…KTRRDHNTGL (80 aa)) the chain is Cytoplasmic. The disordered stretch occupies residues 20-71 (SSPWGPPGSVLPCPSSVPGRPGQRRPPPPPPPTLPPPPPPPPLPPLPLPPLK). Pro residues predominate over residues 43 to 69 (RRPPPPPPPTLPPPPPPPPLPPLPLPP). Residues 81–101 (CLLVMFFMVLVALVGLGLGMF) form a helical; Signal-anchor for type II membrane protein membrane-spanning segment. The Extracellular segment spans residues 102 to 280 (QLFHLQKELA…SKTFFGLYKL (179 aa)). Positions 144-280 (KVAHLTGKPN…SKTFFGLYKL (137 aa)) constitute a THD domain. An N-linked (GlcNAc...) asparagine glycan is attached at asparagine 183. A disulfide bridge links cysteine 201 with cysteine 232. N-linked (GlcNAc...) asparagine glycosylation is found at asparagine 249 and asparagine 259.

The protein belongs to the tumor necrosis factor family. As to quaternary structure, homotrimer. Interacts with ARHGAP9, BAIAP2L1, BTK, CACNB3, CACNB4, CRK, DLG2, DNMBP, DOCK4, EPS8L3, FGR, FYB1, FYN, HCK, ITK, ITSN2, KALRN, LYN, MACC1, MIA, MPP4, MYO15A, NCF1, NCK1, NCK2, NCKIPSD, OSTF1, PIK3R1, PSTPIP1, RIMBP3C, SAMSN1, SH3GL3, SH3PXD2B, SH3PXD2A, SH3RF2, SKAP2, SNX33, SNX9, SORBS3, SPTA1, SRC, SRGAP1, SRGAP2, SRGAP3, TEC, TJP3 and YES1. The soluble form derives from the membrane form by proteolytic processing. The membrane-bound form undergoes two successive intramembrane proteolytic cleavages. The first one is processed by ADAM10 producing an N-terminal fragment, which lacks the receptor-binding extracellular domain. This ADAM10-processed FasL (FasL APL) remnant form is still membrane anchored and further processed by SPPL2A that liberates the FasL intracellular domain (FasL ICD). FasL shedding by ADAM10 is a prerequisite for subsequent intramembrane cleavage by SPPL2A in T-cells. Post-translationally, phosphorylated by FGR on tyrosine residues; this is required for ubiquitination and subsequent internalization. In terms of processing, N-glycosylated. Glycosylation enhances apoptotic activity. Monoubiquitinated.

It is found in the cell membrane. The protein resides in the cytoplasmic vesicle lumen. It localises to the lysosome lumen. The protein localises to the secreted. Its subcellular location is the nucleus. Functionally, cytokine that binds to TNFRSF6/FAS, a receptor that transduces the apoptotic signal into cells. Involved in cytotoxic T-cell-mediated apoptosis, natural killer cell-mediated apoptosis and in T-cell development. Initiates fratricidal/suicidal activation-induced cell death (AICD) in antigen-activated T-cells contributing to the termination of immune responses. TNFRSF6/FAS-mediated apoptosis has also a role in the induction of peripheral tolerance. Binds to TNFRSF6B/DcR3, a decoy receptor that blocks apoptosis. Induces FAS-mediated activation of NF-kappa-B, initiating non-apoptotic signaling pathways. Can induce apoptosis but does not appear to be essential for this process. In terms of biological role, cytoplasmic form induces gene transcription inhibition. This is Tumor necrosis factor ligand superfamily member 6 (FASLG) from Felis catus (Cat).